The primary structure comprises 296 residues: Formylmethanofuran--tetrahydromethanopterin formyltransferase-like protein (296 aa).

This sequence belongs to the FTR family.

The protein is Formylmethanofuran--tetrahydromethanopterin formyltransferase-like protein (ehaS) of Methanothermobacter marburgensis (strain ATCC BAA-927 / DSM 2133 / JCM 14651 / NBRC 100331 / OCM 82 / Marburg) (Methanobacterium thermoautotrophicum).